We begin with the raw amino-acid sequence, 144 residues long: Actin-associated protein FAM107A (144 aa).

A coiled-coil region spans residues 66–112; the sequence is ELQRVLEHRRRNQLIKKKKEELEAKRLQCPFEQELLRRQQRLNQLEK. A Nuclear localization signal motif is present at residues 74-84; that stretch reads RRRNQLIKKKK. The interval 105-124 is disordered; the sequence is QRLNQLEKPPEKEEDHAPEF. Residues 112-124 show a composition bias toward basic and acidic residues; that stretch reads KPPEKEEDHAPEF.

This sequence belongs to the FAM107 family. As to quaternary structure, interacts with ACTB. Interacts with COMMD1; this interaction stabilizes COMMD1 in the nucleus. Interacts with MAP1A. Interacts with PRDX1. Interacts with F-actin. In terms of tissue distribution, widely expressed. Expressed in neurons. Expressed in malignant glial tumors. Expression is reduced or absent in a number of cancer cell lines.

It localises to the nucleus. It is found in the cytoplasm. Its subcellular location is the cytoskeleton. The protein resides in the stress fiber. The protein localises to the cell junction. It localises to the focal adhesion. It is found in the cell projection. Its subcellular location is the ruffle membrane. The protein resides in the synapse. In terms of biological role, stress-inducible actin-binding protein that plays a role in synaptic and cognitive functions by modulating actin filamentous (F-actin) dynamics. Mediates polymerization of globular actin to F-actin. Also binds to, stabilizes and bundles F-actin. Involved in synaptic function by regulating neurite outgrowth in an actin-dependent manner and for the acquisition of hippocampus-dependent cognitive function, such as learning and long-term memory. Plays a role in the actin and microtubule cytoskeleton organization; negatively regulates focal adhesion (FA) assembly promoting malignant glial cell migration in an actin-, microtubule- and MAP1A-dependent manner. Also involved in neuroblastoma G1/S phase cell cycle progression and cell proliferation inhibition by stimulating ubiquitination of NF-kappa-B subunit RELA and NF-kappa-B degradation in a COMMD1- and actin-dependent manner. May play a role in tumor development. This chain is Actin-associated protein FAM107A, found in Homo sapiens (Human).